An 825-amino-acid chain; its full sequence is Probable phosphoketolase (825 aa).

The protein belongs to the XFP family. Requires thiamine diphosphate as cofactor.

The protein is Probable phosphoketolase of Schizosaccharomyces pombe (strain 972 / ATCC 24843) (Fission yeast).